The primary structure comprises 111 residues: uncharacterized protein (111 aa).

The protein belongs to the asfivirus E111R family.

This is an uncharacterized protein from African swine fever virus (isolate Pig/Kenya/KEN-50/1950) (ASFV).